A 140-amino-acid polypeptide reads, in one-letter code: UPF0336 protein TW736 (140 aa).

Belongs to the UPF0336 family.

This Tropheryma whipplei (strain TW08/27) (Whipple's bacillus) protein is UPF0336 protein TW736.